A 449-amino-acid chain; its full sequence is Ribosomal protein uS12 methylthiotransferase RimO (449 aa).

The region spanning 16–126 is the MTTase N-terminal domain; the sequence is PKISFVSLGC…VMEAVHAAIA (111 aa). [4Fe-4S] cluster contacts are provided by Cys25, Cys61, Cys90, Cys157, Cys161, and Cys164. Positions 143-381 constitute a Radical SAM core domain; that stretch reads LTPRHYAYLK…MEHQQKISAR (239 aa). The region spanning 384 to 449 is the TRAM domain; the sequence is REKIGKHVSV…DAYDLHGKAV (66 aa).

It belongs to the methylthiotransferase family. RimO subfamily. It depends on [4Fe-4S] cluster as a cofactor.

The protein localises to the cytoplasm. It carries out the reaction L-aspartate(89)-[ribosomal protein uS12]-hydrogen + (sulfur carrier)-SH + AH2 + 2 S-adenosyl-L-methionine = 3-methylsulfanyl-L-aspartate(89)-[ribosomal protein uS12]-hydrogen + (sulfur carrier)-H + 5'-deoxyadenosine + L-methionine + A + S-adenosyl-L-homocysteine + 2 H(+). Catalyzes the methylthiolation of an aspartic acid residue of ribosomal protein uS12. The protein is Ribosomal protein uS12 methylthiotransferase RimO of Beijerinckia indica subsp. indica (strain ATCC 9039 / DSM 1715 / NCIMB 8712).